Reading from the N-terminus, the 350-residue chain is Kelch domain-containing protein 9 (350 aa).

Kelch repeat units lie at residues 39–89 (RFYL…LVGG), 91–137 (WLCV…SHTC), and 325–350 (QLYLVGGFGEDGRTASPQVCILEFFI).

Interacts with CCNA1.

This Mus musculus (Mouse) protein is Kelch domain-containing protein 9 (Klhdc9).